A 150-amino-acid chain; its full sequence is Globin-3 (150 aa).

In terms of domain architecture, Globin spans 11 to 150 (PLSAAEKTKI…MICILLRSAY (140 aa)). The heme b site is built by His-74 and His-106.

It belongs to the globin family. In terms of assembly, monomer.

This is Globin-3 from Petromyzon marinus (Sea lamprey).